Consider the following 103-residue polypeptide: Truncated secreted TNF-receptor-like protein A53R (103 aa).

Residues 36 to 73 (SCDKGEYLDKRHNQCCNRCPPGEFAKVRCNGNDNTKCE) form a TNFR-Cys 1 repeat. Disulfide bonds link Cys-37–Cys-50, Cys-51–Cys-64, and Cys-54–Cys-72. A TNFR-Cys 2; truncated repeat occupies 74-103 (RCPPHTYTTIPIILMDVINVENAQPDHLIR).

This sequence belongs to the poxviridae A53R protein family.

The polypeptide is Truncated secreted TNF-receptor-like protein A53R (Vaccinia virus (strain Western Reserve) (VACV)).